The following is a 372-amino-acid chain: Glutamate 5-kinase (372 aa).

K14 contributes to the ATP binding site. 3 residues coordinate substrate: S54, D141, and N153. Position 173–174 (173–174) interacts with ATP; that stretch reads TD. The region spanning 280-358 is the PUA domain; the sequence is RGRVVIDAGA…SEIESVLGHL (79 aa).

This sequence belongs to the glutamate 5-kinase family.

The protein resides in the cytoplasm. It catalyses the reaction L-glutamate + ATP = L-glutamyl 5-phosphate + ADP. It functions in the pathway amino-acid biosynthesis; L-proline biosynthesis; L-glutamate 5-semialdehyde from L-glutamate: step 1/2. In terms of biological role, catalyzes the transfer of a phosphate group to glutamate to form L-glutamate 5-phosphate. This is Glutamate 5-kinase from Cupriavidus pinatubonensis (strain JMP 134 / LMG 1197) (Cupriavidus necator (strain JMP 134)).